Consider the following 408-residue polypeptide: Phosphoglycerate kinase (408 aa).

Substrate-binding positions include 24–26 (DLN), R39, 62–65 (HLGR), R121, and R161. ATP-binding positions include K211, G307, E338, and 364–367 (GGDS).

The protein belongs to the phosphoglycerate kinase family. Monomer.

The protein resides in the cytoplasm. It catalyses the reaction (2R)-3-phosphoglycerate + ATP = (2R)-3-phospho-glyceroyl phosphate + ADP. It functions in the pathway carbohydrate degradation; glycolysis; pyruvate from D-glyceraldehyde 3-phosphate: step 2/5. The chain is Phosphoglycerate kinase from Arthrobacter sp. (strain FB24).